Consider the following 279-residue polypeptide: Large ribosomal subunit protein uL2 (279 aa).

Disordered regions lie at residues 30-59 (EKSLVRPLPKKGGRNNTGRITTRHKGGGHK) and 225-279 (VMNP…KNKR). Basic residues predominate over residues 50–59 (TTRHKGGGHK). Over residues 253–268 (PEGRTRRPNKESDKLI) the composition is skewed to basic and acidic residues. The span at 269 to 279 (VRRRRTGKNKR) shows a compositional bias: basic residues.

This sequence belongs to the universal ribosomal protein uL2 family. In terms of assembly, part of the 50S ribosomal subunit. Forms a bridge to the 30S subunit in the 70S ribosome.

Functionally, one of the primary rRNA binding proteins. Required for association of the 30S and 50S subunits to form the 70S ribosome, for tRNA binding and peptide bond formation. It has been suggested to have peptidyltransferase activity; this is somewhat controversial. Makes several contacts with the 16S rRNA in the 70S ribosome. This Kocuria rhizophila (strain ATCC 9341 / DSM 348 / NBRC 103217 / DC2201) protein is Large ribosomal subunit protein uL2.